A 225-amino-acid chain; its full sequence is MGFGDLKSAAGLRVLNDFLADKSYIEGYVPSQADIAVFEAVGAPPPADLFHALRWYNHIKSYEKEKASLPGVKKALGKYGPADVEDTTGSGATDSKDDDDIDLFGSDDEEESEEAKRLREERLAQYESKKAKKPALVAKSSILLDVKPWDDETDMAKLEECVRSIQADGLVWGSSKLVPVGYGIKKLQIQCVVEDDKVGTDMLEEQITAFEDYVQSMDVAAFNKI.

The GST C-terminal domain occupies 2–84 (GFGDLKSAAG…ALGKYGPADV (83 aa)). Residues 80–114 (GPADVEDTTGSGATDSKDDDDIDLFGSDDEEESEE) form a disordered region. A compositionally biased stretch (acidic residues) spans 96–113 (KDDDDIDLFGSDDEEESE). A Phosphoserine; by CK2 modification is found at Ser106.

Belongs to the EF-1-beta/EF-1-delta family. EF-1 is composed of 4 subunits: alpha, beta (alpha subunit of the eEF1B subcomplex), delta (beta subunit of the eEF1B subcomplex), and gamma (gamma subunit of the eEF1B subcomplex). Interacts with elongation factor EEF1A1. Phosphorylation affects the GDP/GTP exchange rate.

Its function is as follows. Catalytic subunit of the guanine nucleotide exchange factor (GEF) (eEF1B subcomplex) of the eukaryotic elongation factor 1 complex (eEF1). Stimulates the exchange of GDP for GTP on elongation factor 1A (eEF1A), probably by displacing GDP from the nucleotide binding pocket in eEF1A. In Gallus gallus (Chicken), this protein is Elongation factor 1-beta (EEF1B).